Here is a 657-residue protein sequence, read N- to C-terminus: Acetyl-coenzyme A synthetase (657 aa).

CoA is bound by residues 192 to 195 (RRGK) and threonine 311. ATP is bound by residues 387-389 (GEP), 411-416 (DTWWQT), aspartate 504, arginine 519, and arginine 530. The Mg(2+) site is built by histidine 543 and valine 546. Arginine 592 contacts CoA. Lysine 617 carries the post-translational modification N6-acetyllysine.

It belongs to the ATP-dependent AMP-binding enzyme family. Requires Mg(2+) as cofactor. Post-translationally, acetylated. Deacetylation by the SIR2-homolog deacetylase activates the enzyme.

The catalysed reaction is acetate + ATP + CoA = acetyl-CoA + AMP + diphosphate. In terms of biological role, catalyzes the conversion of acetate into acetyl-CoA (AcCoA), an essential intermediate at the junction of anabolic and catabolic pathways. AcsA undergoes a two-step reaction. In the first half reaction, AcsA combines acetate with ATP to form acetyl-adenylate (AcAMP) intermediate. In the second half reaction, it can then transfer the acetyl group from AcAMP to the sulfhydryl group of CoA, forming the product AcCoA. In Campylobacter jejuni subsp. jejuni serotype O:6 (strain 81116 / NCTC 11828), this protein is Acetyl-coenzyme A synthetase.